The following is a 705-amino-acid chain: Putative membrane protein SCO6666 (705 aa).

Transmembrane regions (helical) follow at residues 16 to 36 (VMLL…GVFG), 144 to 164 (LHGI…PLLG), 177 to 197 (NAEL…FGGL), 201 to 221 (GLPL…LFGF), 232 to 252 (IQVT…LMLV), 280 to 300 (LFSG…PSTF), 306 to 326 (LAVA…LPAL), 360 to 380 (VAVL…VTGM), 504 to 524 (ALTV…SVLL), 528 to 548 (TVAT…WVFQ), 561 to 581 (LGAL…GLAM), 615 to 635 (VVTC…TGGF), and 636 to 656 (SPIL…ATVV).

This sequence belongs to the resistance-nodulation-cell division (RND) (TC 2.A.6) family. MmpL subfamily.

It is found in the cell membrane. This Streptomyces coelicolor (strain ATCC BAA-471 / A3(2) / M145) protein is Putative membrane protein SCO6666.